The chain runs to 175 residues: Chorismate pyruvate-lyase (175 aa).

The substrate site is built by Met-36, Arg-78, Leu-116, and Glu-157.

Belongs to the UbiC family. Monomer.

It localises to the cytoplasm. The catalysed reaction is chorismate = 4-hydroxybenzoate + pyruvate. It functions in the pathway cofactor biosynthesis; ubiquinone biosynthesis. In terms of biological role, removes the pyruvyl group from chorismate, with concomitant aromatization of the ring, to provide 4-hydroxybenzoate (4HB) for the ubiquinone pathway. This is Chorismate pyruvate-lyase from Hamiltonella defensa subsp. Acyrthosiphon pisum (strain 5AT).